Consider the following 356-residue polypeptide: DNA polymerase IV (356 aa).

Residues 6–187 (IIHVDMDYFF…LDIGDFPGVG (182 aa)) form the UmuC domain. Residues D10 and D105 each contribute to the Mg(2+) site. Residue E106 is part of the active site.

The protein belongs to the DNA polymerase type-Y family. Monomer. The cofactor is Mg(2+).

Its subcellular location is the cytoplasm. It catalyses the reaction DNA(n) + a 2'-deoxyribonucleoside 5'-triphosphate = DNA(n+1) + diphosphate. Its function is as follows. Poorly processive, error-prone DNA polymerase involved in untargeted mutagenesis. Copies undamaged DNA at stalled replication forks, which arise in vivo from mismatched or misaligned primer ends. These misaligned primers can be extended by PolIV. Exhibits no 3'-5' exonuclease (proofreading) activity. May be involved in translesional synthesis, in conjunction with the beta clamp from PolIII. The sequence is that of DNA polymerase IV from Staphylococcus saprophyticus subsp. saprophyticus (strain ATCC 15305 / DSM 20229 / NCIMB 8711 / NCTC 7292 / S-41).